The chain runs to 510 residues: Catalase (510 aa).

An N-terminal signal peptide occupies residues 1-26 (MPLLNWSRHMVCLTAAGLITVPTVYA). Residues His78 and Asn150 contribute to the active site. Tyr358 lines the heme pocket. Polar residues predominate over residues 386–400 (NQDGALNTGHTTSGV). The interval 386–412 (NQDGALNTGHTTSGVNYEPSRLEPRPA) is disordered.

Belongs to the catalase family. It depends on heme as a cofactor.

The protein localises to the periplasm. It carries out the reaction 2 H2O2 = O2 + 2 H2O. Decomposes hydrogen peroxide into water and oxygen; serves to protect cells from the toxic effects of hydrogen peroxide. In Pseudomonas syringae pv. syringae, this protein is Catalase (katB).